A 520-amino-acid chain; its full sequence is GMP synthase [glutamine-hydrolyzing] (520 aa).

Positions 9–202 constitute a Glutamine amidotransferase type-1 domain; it reads TILIIDFGSQ…VHRIVGVKPG (194 aa). The Nucleophile role is filled by C86. Active-site residues include H176 and E178. The GMPS ATP-PPase domain maps to 203–395; the sequence is WTMGAYREQA…LGLPDSFIGR (193 aa). Residue 230 to 236 participates in ATP binding; that stretch reads SGGVDSS.

In terms of assembly, homodimer.

The catalysed reaction is XMP + L-glutamine + ATP + H2O = GMP + L-glutamate + AMP + diphosphate + 2 H(+). Its pathway is purine metabolism; GMP biosynthesis; GMP from XMP (L-Gln route): step 1/1. Its function is as follows. Catalyzes the synthesis of GMP from XMP. This Brucella ovis (strain ATCC 25840 / 63/290 / NCTC 10512) protein is GMP synthase [glutamine-hydrolyzing].